The chain runs to 28 residues: leu operon leader peptide (28 aa).

In terms of biological role, involved in control of the biosynthesis of leucine. The chain is leu operon leader peptide (leuL) from Salmonella typhimurium (strain LT2 / SGSC1412 / ATCC 700720).